The primary structure comprises 798 residues: Nucleolin homolog 1 (798 aa).

Positions 1-548 (MGFDSPRGRG…IISEEERRRQ (548 aa)) are disordered. Gly residues predominate over residues 8 to 34 (GRGGGGFRGGRGGGSGFTPRGGGGGFR). 3 stretches are compositionally biased toward basic and acidic residues: residues 59–75 (GGDR…DREG), 88–98 (GGDRGGFRGGD), and 106–116 (GGDRGNFRGGD). Composition is skewed to gly residues over residues 150-164 (RGGG…GRGG) and 171-184 (GGRG…GGSR). 4 stretches are compositionally biased toward acidic residues: residues 196–205 (SDGDDDEEEE), 226–242 (DDSG…DEEP), 258–278 (EDSD…DDDA), and 287–317 (VEED…EETE). Over residues 328–350 (SLKSVDSTKGKQVNLSKVATPTT) the composition is skewed to polar residues. Acidic residues-rich tracts occupy residues 378-404 (DDDS…EEED) and 424-450 (IEED…EEDT). The segment covering 467–476 (AANRAAASAA) has biased composition (low complexity). Positions 478–504 (DSDEDEDEEDEEDVEEEDEEEEEEEDI) are enriched in acidic residues. A compositionally biased stretch (basic and acidic residues) spans 532-548 (VKSDGKSIISEEERRRQ). One can recognise an RRM domain in the interval 638–713 (LQLFINALPG…HLVDVFYARH (76 aa)). The segment at 736–798 (PKVAADSSGD…FKKTGFKGKK (63 aa)) is disordered. Acidic residues predominate over residues 743 to 762 (SGDDSEEVASSDEGIQEVEE). A compositionally biased stretch (basic residues) spans 783-798 (QQKKPQFKKTGFKGKK).

In terms of assembly, identified in an mRNP granule complex containing untranslated mRNAs.

The protein localises to the nucleus. Its subcellular location is the nucleolus. In terms of biological role, nucleolin is the major nucleolar protein of growing eukaryotic cells. It is found associated with intranucleolar chromatin and pre-ribosomal particles. It induces chromatin decondensation by binding to histone H1. It is thought to play a role in pre-rRNA transcription and ribosome assembly. May play a role in the process of transcriptional elongation. Involved in phase separation into sub-nucleolar condensates. The polypeptide is Nucleolin homolog 1 (Caenorhabditis elegans).